The chain runs to 542 residues: Apolipoprotein N-acyltransferase (542 aa).

A run of 6 helical transmembrane segments spans residues 26-46, 54-74, 89-109, 113-133, 163-183, and 187-207; these read ASVI…LSLV, IWCL…SWML, LLIS…VLCF, YWGA…VRYY, WAGQ…VLVF, and FSYG…GTYY. Positions 220–499 constitute a CN hydrolase domain; sequence LRVAIVQPGY…PDVLQVSVPV (280 aa). Glu-264 functions as the Proton acceptor in the catalytic mechanism. The active site involves Lys-349. The active-site Nucleophile is the Cys-404. A helical membrane pass occupies residues 509-529; it reads FGDAPLLFVAVSSVLGVVGYF.

The protein belongs to the CN hydrolase family. Apolipoprotein N-acyltransferase subfamily.

The protein resides in the cell inner membrane. The catalysed reaction is N-terminal S-1,2-diacyl-sn-glyceryl-L-cysteinyl-[lipoprotein] + a glycerophospholipid = N-acyl-S-1,2-diacyl-sn-glyceryl-L-cysteinyl-[lipoprotein] + a 2-acyl-sn-glycero-3-phospholipid + H(+). It participates in protein modification; lipoprotein biosynthesis (N-acyl transfer). In terms of biological role, catalyzes the phospholipid dependent N-acylation of the N-terminal cysteine of apolipoprotein, the last step in lipoprotein maturation. The chain is Apolipoprotein N-acyltransferase from Chlamydia muridarum (strain MoPn / Nigg).